A 279-amino-acid polypeptide reads, in one-letter code: Putative methyltransferase Jann_4284 (279 aa).

The protein is Putative methyltransferase Jann_4284 of Jannaschia sp. (strain CCS1).